Consider the following 260-residue polypeptide: UPF0758 protein Smed_1459 (260 aa).

The region spanning 138 to 260 (VLSSWSAVID…HVSLKGLQLF (123 aa)) is the MPN domain. Zn(2+) contacts are provided by histidine 209, histidine 211, and aspartate 222. Positions 209–222 (HNHPSGDPTPSCAD) match the JAMM motif motif.

Belongs to the UPF0758 family.

In Sinorhizobium medicae (strain WSM419) (Ensifer medicae), this protein is UPF0758 protein Smed_1459.